A 522-amino-acid chain; its full sequence is F-box/LRR-repeat protein 16 (522 aa).

An F-box domain is found at 38 to 84; the sequence is YDFTANLPDDCLAHIFQFLSAGDRKRCSLVSKRWLLVDGQNRHRLSL. LRR repeat units lie at residues 115-140, 141-166, 169-191, 266-290, 291-316, 319-344, 348-369, 370-393, 395-420, and 421-447; these read SFSL…KLRG, CREI…SCGS, FGAK…SLKR, RLQV…HIVK, TPDC…HIDG, VKRI…VLIG, TYMS…ALCG, SGTI…KFCI, GCLI…KVKK, and CSLV…DDDE.

The protein is F-box/LRR-repeat protein 16 (FBL16) of Arabidopsis thaliana (Mouse-ear cress).